A 104-amino-acid polypeptide reads, in one-letter code: Circadian clock oscillator protein KaiB (104 aa).

It belongs to the KaiB family. The KaiABC complex composition changes during the circadian cycle to control KaiC phosphorylation. Complexes KaiC(6), KaiA(2-4):KaiC(6), KaiB(6):KaiC(6) and KaiC(6):KaiB(6):KaiA(12) are among the most important forms, many form cooperatively. Undergoes a major conformational rearrangment; in the free state forms homotetramers as a dimer of dimers. When bound to the CI domain of KaiC switches to a monomeric thioredoxin-fold (KaiB(fs)). KaiB(fs) binds CikA, leading it to dephosphorylate phospho-RpaA.

Key component of the KaiABC oscillator complex, which constitutes the main circadian regulator in cyanobacteria. Complex composition changes during the circadian cycle to control KaiC phosphorylation. KaiA stimulates KaiC autophosphorylation, while KaiB sequesters KaiA, leading to KaiC autodephosphorylation. Phospho-Ser-431 KaiC accumulation triggers binding of KaiB to form the KaiB(6):KaiC(6) complex, leading to changes in output regulators CikA and SasA. KaiB switches to a thioredoxin-like fold (KaiB(fs)) when bound to KaiC. KaiB(6):KaiC(6) formation exposes a site for KaiA binding that sequesters KaiA from KaiC, making the KaiC(6):KaiB(6):KaiA(12) complex that results in KaiC autodephosphorylation. Functionally, a metamorphic protein which reversibly switches between an inactive tetrameric fold and a rare, thioredoxin-like monomeric fold (KaiB(fs)). KaiB(fs) binds phospho-KaiC, KaiA and CikA. KaiA and CikA compete for binding to KaiB(fs), and KaiB(fs) and SasA compete for binding to KaiC, thus the clock oscillator and output signal pathway are tightly coupled. This chain is Circadian clock oscillator protein KaiB, found in Picosynechococcus sp. (strain ATCC 27264 / PCC 7002 / PR-6) (Agmenellum quadruplicatum).